Consider the following 679-residue polypeptide: Protein hook (679 aa).

The Calponin-homology (CH) domain occupies 6 to 123 (NEMYYSLLEW…RLLQLVLGCA (118 aa)). Coiled coils occupy residues 135-437 (EIMC…LKCG) and 480-574 (QTAL…QEIL).

It belongs to the hook family. In terms of assembly, homodimer. Interacts with microtubules via its N-terminus.

Its subcellular location is the cytoplasm. It localises to the cytoskeleton. The protein localises to the endosome. The protein resides in the synapse. Involved in endocytic trafficking by stabilizing organelles of the endocytic pathway. Probably acts as a cytoskeletal linker protein required to tether endosome vesicles to the cytoskeleton. Involved in modulation of endocytosis at stages required for down-regulation of membrane proteins that control synapse size. Not involved in synaptic vesicle recycling. Required in R7 cells for boss endocytosis into multivesicular bodies (MVBs). Has a role in regulating adult longevity. The sequence is that of Protein hook from Drosophila simulans (Fruit fly).